Reading from the N-terminus, the 745-residue chain is Polyribonucleotide nucleotidyltransferase (745 aa).

Asp-487 and Asp-493 together coordinate Mg(2+). Positions 554–613 (PRIETMQIPTDKIRDVIGTGGKIIREIVEKTGAKINIEDTGVVKIASSDGKAIKAAYNWI) constitute a KH domain. The S1 motif domain maps to 623-691 (GTIYDGTIVK…ERGKIRLSMK (69 aa)). Positions 695–745 (QETGEDITEKLKAERAERGEPEREERSDRGDRGDRGPRRDRGERRRESSGE) are disordered. Residues 701–745 (ITEKLKAERAERGEPEREERSDRGDRGDRGPRRDRGERRRESSGE) are compositionally biased toward basic and acidic residues.

Belongs to the polyribonucleotide nucleotidyltransferase family. It depends on Mg(2+) as a cofactor.

It localises to the cytoplasm. It carries out the reaction RNA(n+1) + phosphate = RNA(n) + a ribonucleoside 5'-diphosphate. Functionally, involved in mRNA degradation. Catalyzes the phosphorolysis of single-stranded polyribonucleotides processively in the 3'- to 5'-direction. The chain is Polyribonucleotide nucleotidyltransferase from Methylorubrum populi (strain ATCC BAA-705 / NCIMB 13946 / BJ001) (Methylobacterium populi).